The primary structure comprises 320 residues: Beta-ketoacyl-[acyl-carrier-protein] synthase III (320 aa).

Catalysis depends on residues Cys-112 and His-245. The ACP-binding stretch occupies residues 246 to 250 (QANIR). Residue Asn-275 is part of the active site.

This sequence belongs to the thiolase-like superfamily. FabH family. Homodimer.

The protein resides in the cytoplasm. The catalysed reaction is malonyl-[ACP] + acetyl-CoA + H(+) = 3-oxobutanoyl-[ACP] + CO2 + CoA. Its pathway is lipid metabolism; fatty acid biosynthesis. In terms of biological role, catalyzes the condensation reaction of fatty acid synthesis by the addition to an acyl acceptor of two carbons from malonyl-ACP. Catalyzes the first condensation reaction which initiates fatty acid synthesis and may therefore play a role in governing the total rate of fatty acid production. Possesses both acetoacetyl-ACP synthase and acetyl transacylase activities. Its substrate specificity determines the biosynthesis of branched-chain and/or straight-chain of fatty acids. This Streptococcus thermophilus (strain CNRZ 1066) protein is Beta-ketoacyl-[acyl-carrier-protein] synthase III.